We begin with the raw amino-acid sequence, 679 residues long: Biosynthetic arginine decarboxylase (679 aa).

The tract at residues 1–43 is disordered; that stretch reads MKHRGQEEMGVESTATSDEVVKVPANGNKLEGKNHKQKKLLPT. At K149 the chain carries N6-(pyridoxal phosphate)lysine. 331–341 contributes to the substrate binding site; that stretch reads LDVGGGLGVDY.

This sequence belongs to the Orn/Lys/Arg decarboxylase class-II family. SpeA subfamily. Mg(2+) serves as cofactor. Requires pyridoxal 5'-phosphate as cofactor.

The enzyme catalyses L-arginine + H(+) = agmatine + CO2. Catalyzes the biosynthesis of agmatine from arginine. This is Biosynthetic arginine decarboxylase from Nostoc sp. (strain PCC 7120 / SAG 25.82 / UTEX 2576).